The following is a 382-amino-acid chain: Apolipoprotein A-IV (382 aa).

An N-terminal signal peptide occupies residues 1-20; sequence MFLKAVVLTLSLVAVTGAQA. A run of 13 repeats spans residues 33–54, 60–81, 82–103, 115–136, 137–158, 159–180, 181–202, 203–224, 225–246, 247–268, 269–286, 287–308, and 309–330. The tract at residues 33-330 is 13 X 22 AA approximate tandem repeats; sequence DYFSQLSNNA…QVEELRQKLG (298 aa).

The protein belongs to the apolipoprotein A1/A4/E family. In terms of assembly, homodimer. Phosphorylation sites are present in the extracellular medium.

It is found in the secreted. May have a role in chylomicrons and VLDL secretion and catabolism. Required for efficient activation of lipoprotein lipase by ApoC-II; potent activator of LCAT. Apoa-IV is a major component of HDL and chylomicrons. This is Apolipoprotein A-IV (APOA4) from Neomonachus schauinslandi (Hawaiian monk seal).